Consider the following 606-residue polypeptide: DNA primase (606 aa).

The CHC2-type zinc-finger motif lies at 40-64; the sequence is CPFHQEKTPSFYVVPEKRFYFCHGC. Residues 256 to 349 enclose the Toprim domain; that stretch reads KAAVLVEGYF…DPDTFARREG (94 aa). E262, D307, and D309 together coordinate Mg(2+). The disordered stretch occupies residues 429 to 451; the sequence is VPLPKPAGGDAPPSSPNRPAPPL. Over residues 441-451 the composition is skewed to pro residues; that stretch reads PSSPNRPAPPL.

It belongs to the DnaG primase family. Monomer. Interacts with DnaB. Zn(2+) is required as a cofactor. It depends on Mg(2+) as a cofactor.

It carries out the reaction ssDNA + n NTP = ssDNA/pppN(pN)n-1 hybrid + (n-1) diphosphate.. Functionally, RNA polymerase that catalyzes the synthesis of short RNA molecules used as primers for DNA polymerase during DNA replication. The protein is DNA primase of Myxococcus xanthus.